A 96-amino-acid polypeptide reads, in one-letter code: Large ribosomal subunit protein uL23 (96 aa).

This sequence belongs to the universal ribosomal protein uL23 family. In terms of assembly, part of the 50S ribosomal subunit. Contacts protein L29, and trigger factor when it is bound to the ribosome.

Functionally, one of the early assembly proteins it binds 23S rRNA. One of the proteins that surrounds the polypeptide exit tunnel on the outside of the ribosome. Forms the main docking site for trigger factor binding to the ribosome. The sequence is that of Large ribosomal subunit protein uL23 from Solidesulfovibrio magneticus (strain ATCC 700980 / DSM 13731 / RS-1) (Desulfovibrio magneticus).